Here is a 425-residue protein sequence, read N- to C-terminus: Lipoyl synthase, mitochondrial (425 aa).

The transit peptide at 1 to 33 directs the protein to the mitochondrion; that stretch reads MAASSTRLRCLYASSSTWKTSPSQSLISLSRRY. Residues 17–55 are disordered; it reads TWKTSPSQSLISLSRRYATTSSAPPTPSDESSSTLPKRR. Residues 33 to 51 are compositionally biased toward polar residues; it reads YATTSSAPPTPSDESSSTL. [4Fe-4S] cluster is bound by residues C142, C147, C153, C173, C177, C180, and S388. The region spanning 156-377 is the Radical SAM core domain; the sequence is GSDKSAATAT…RQRALEMGFL (222 aa).

It belongs to the radical SAM superfamily. Lipoyl synthase family. The cofactor is [4Fe-4S] cluster.

The protein localises to the mitochondrion. It catalyses the reaction [[Fe-S] cluster scaffold protein carrying a second [4Fe-4S](2+) cluster] + N(6)-octanoyl-L-lysyl-[protein] + 2 oxidized [2Fe-2S]-[ferredoxin] + 2 S-adenosyl-L-methionine + 4 H(+) = [[Fe-S] cluster scaffold protein] + N(6)-[(R)-dihydrolipoyl]-L-lysyl-[protein] + 4 Fe(3+) + 2 hydrogen sulfide + 2 5'-deoxyadenosine + 2 L-methionine + 2 reduced [2Fe-2S]-[ferredoxin]. It functions in the pathway protein modification; protein lipoylation via endogenous pathway; protein N(6)-(lipoyl)lysine from octanoyl-[acyl-carrier-protein]: step 2/2. Catalyzes the radical-mediated insertion of two sulfur atoms into the C-6 and C-8 positions of the octanoyl moiety bound to the lipoyl domains of lipoate-dependent enzymes, thereby converting the octanoylated domains into lipoylated derivatives. This Talaromyces marneffei (strain ATCC 18224 / CBS 334.59 / QM 7333) (Penicillium marneffei) protein is Lipoyl synthase, mitochondrial.